The following is a 62-amino-acid chain: Large ribosomal subunit protein uL30 (62 aa).

The protein belongs to the universal ribosomal protein uL30 family. As to quaternary structure, part of the 50S ribosomal subunit.

This Ruegeria pomeroyi (strain ATCC 700808 / DSM 15171 / DSS-3) (Silicibacter pomeroyi) protein is Large ribosomal subunit protein uL30.